A 639-amino-acid chain; its full sequence is Elongation factor 4 (639 aa).

Positions 39-221 (TMIRNFCIIA…EIVRRVPAPV (183 aa)) constitute a tr-type G domain. GTP contacts are provided by residues 51–56 (DHGKST) and 168–171 (NKID).

It belongs to the TRAFAC class translation factor GTPase superfamily. Classic translation factor GTPase family. LepA subfamily.

It localises to the cell membrane. The catalysed reaction is GTP + H2O = GDP + phosphate + H(+). Functionally, required for accurate and efficient protein synthesis under certain stress conditions. May act as a fidelity factor of the translation reaction, by catalyzing a one-codon backward translocation of tRNAs on improperly translocated ribosomes. Back-translocation proceeds from a post-translocation (POST) complex to a pre-translocation (PRE) complex, thus giving elongation factor G a second chance to translocate the tRNAs correctly. Binds to ribosomes in a GTP-dependent manner. The polypeptide is Elongation factor 4 (Frankia casuarinae (strain DSM 45818 / CECT 9043 / HFP020203 / CcI3)).